Reading from the N-terminus, the 268-residue chain is Small ribosomal subunit protein eS1 (268 aa).

Residues M1–V21 form a disordered region.

The protein belongs to the eukaryotic ribosomal protein eS1 family. In terms of assembly, component of the small ribosomal subunit. Mature ribosomes consist of a small (40S) and a large (60S) subunit. The 40S subunit contains about 33 different proteins and 1 molecule of RNA (18S). The 60S subunit contains about 49 different proteins and 3 molecules of RNA (28S, 5.8S and 5S).

It localises to the cytoplasm. Functionally, essential for oogenesis; required for late follicle cell development. In Drosophila virilis (Fruit fly), this protein is Small ribosomal subunit protein eS1.